The chain runs to 372 residues: MAPAPPPAASFTSAEVQRRLAAGACWVRRGASLYDLTGFVRHHPGGEQLLLARAGQDISADLDGPPHKHSDNARRWLEQYYVGELRADPQDPTENGAGAPAETQKTDAAIEPQFKVVDWDKDLVDWQKPLLWQVGHLGEKYDEWVHQPVARPIRLFHSDLIEAFSKTVWYSVPIIWVPLVLYLSWSYYRTLTQDNIRLFASFTRDYSLVVPESVFIGLFVLGMLIWTLVEYLIHRFLFHMKPPSNSHYLIMLHFVMHGQHHKAPFDGSRLVFPPVPASVVVAFFYVFLRLILPEAVAGILFAGGLLGYVLYDMTHYYLHFGSPHKGSYLYNMKAHHVKHHFEYQKSGFGISTKLWDYFFHTLIPEEADPKMQ.

Residues 8–86 (AASFTSAEVQ…LEQYYVGELR (79 aa)) enclose the Cytochrome b5 heme-binding domain. Heme is bound by residues His-43 and His-69. 2 helical membrane passes run 168-188 (VWYS…WSYY) and 213-233 (SVFI…EYLI). A Fatty acid hydroxylase domain is found at 219-361 (FVLGMLIWTL…TKLWDYFFHT (143 aa)). Zn(2+) is bound by residues His-234, His-239, His-257, His-260, and His-261. A run of 2 helical transmembrane segments spans residues 268–288 (SRLV…YVFL) and 290–310 (LILP…GYVL). Zn(2+)-binding residues include His-315, His-319, His-336, His-339, and His-340.

It belongs to the sterol desaturase family. SCS7 subfamily. It depends on Zn(2+) as a cofactor. Detected in oligodendrocytes (at protein level). Detected in sciatic nerve.

The protein resides in the endoplasmic reticulum membrane. The protein localises to the microsome membrane. It carries out the reaction a 1,2-saturated fatty acid + 2 Fe(II)-[cytochrome b5] + O2 + 2 H(+) = a (R)-2-hydroxy fatty acid + 2 Fe(III)-[cytochrome b5] + H2O. The catalysed reaction is hexadecanoate + 2 Fe(II)-[cytochrome b5] + O2 + 2 H(+) = (R)-2-hydroxyhexadecanoate + 2 Fe(III)-[cytochrome b5] + H2O. It catalyses the reaction octadecanoate + 2 Fe(II)-[cytochrome b5] + O2 + 2 H(+) = (R)-2-hydroxyoctadecanoate + 2 Fe(III)-[cytochrome b5] + H2O. The enzyme catalyses docosanoate + 2 Fe(II)-[cytochrome b5] + O2 + 2 H(+) = 2-hydroxydocosanoate + 2 Fe(III)-[cytochrome b5] + H2O. It carries out the reaction tetracosanoate + 2 Fe(II)-[cytochrome b5] + O2 + 2 H(+) = (R)-2-hydroxytetracosanoate + 2 Fe(III)-[cytochrome b5] + H2O. Its pathway is lipid metabolism; fatty acid metabolism. The protein operates within sphingolipid metabolism; galactosylceramide biosynthesis. Functionally, catalyzes the hydroxylation of free fatty acids at the C-2 position to produce 2-hydroxy fatty acids, which are building blocks of sphingolipids and glycosphingolipids common in neural tissue and epidermis. FA2H is stereospecific for the production of (R)-2-hydroxy fatty acids. Plays an essential role in the synthesis of galactosphingolipids of the myelin sheath. Responsible for the synthesis of sphingolipids and glycosphingolipids involved in the formation of epidermal lamellar bodies critical for skin permeability barrier. Participates in the synthesis of glycosphingolipids and a fraction of type II wax diesters in sebaceous gland, specifically regulating hair follicle homeostasis. Involved in the synthesis of sphingolipids of plasma membrane rafts, controlling lipid raft mobility and trafficking of raft-associated proteins. The protein is Fatty acid 2-hydroxylase of Rattus norvegicus (Rat).